The following is a 208-amino-acid chain: Microtubule-associated protein Jupiter (208 aa).

2 disordered regions span residues 24–43 (RPPG…QTPR) and 82–106 (RGQK…PGKN). Ser-30 bears the Phosphoserine mark. Phosphothreonine is present on Thr-41. The segment covering 82 to 93 (RGQKTVDSHSRL) has biased composition (basic and acidic residues). Residues Thr-98 and Thr-102 each carry the phosphothreonine modification. Ser-111, Ser-139, and Ser-150 each carry phosphoserine. Residues 132-208 (HYNGKSGSVS…PPGGYSSGLW (77 aa)) form a disordered region. Residues 137–150 (SGSVSSASSSVSSS) show a composition bias toward low complexity. 2 stretches are compositionally biased toward polar residues: residues 151 to 165 (TENL…SEGN) and 178 to 189 (EYSQRQESSNGG).

The protein belongs to the MAP Jupiter family. Ubiquitous expression throughout development. Expressed during cell division in the syncytial embryo. Expressed in developing photoreceptors of the eye imaginal disk of the third larval stage. In adults, highly expressed in neurons of the brain, concentrated in axons. In the adult ovaries, expression accumulates in the germarium and the polar follicular cells as well as in the oocyte along the microtubule network.

It localises to the nucleus. The protein resides in the cytoplasm. The protein localises to the cytoskeleton. It is found in the spindle. Functionally, binds to all microtubule populations. This chain is Microtubule-associated protein Jupiter, found in Drosophila melanogaster (Fruit fly).